The primary structure comprises 419 residues: 4-hydroxyphenylpyruvate dioxygenase (419 aa).

VOC domains lie at Gly41 to Arg187 and Ala218 to Lys376. Residues His221, His304, and Glu387 each coordinate Fe cation.

This sequence belongs to the 4HPPD family. Fe cation is required as a cofactor.

It catalyses the reaction 3-(4-hydroxyphenyl)pyruvate + O2 = homogentisate + CO2. It functions in the pathway amino-acid degradation; L-phenylalanine degradation; acetoacetate and fumarate from L-phenylalanine: step 3/6. The sequence is that of 4-hydroxyphenylpyruvate dioxygenase (HPPD) from Zymoseptoria tritici (Speckled leaf blotch fungus).